A 477-amino-acid chain; its full sequence is Tripartite motif-containing protein 72 (477 aa).

16 residues coordinate Zn(2+): Leu-14, Pro-17, Pro-29, Cys-31, Thr-34, Gln-37, Thr-53, Pro-56, Gly-86, Leu-89, Val-97, Glu-100, Leu-105, Gly-108, Gly-114, and Lys-117. An RING-type zinc finger spans residues 16–59; the sequence is CPLCLELFRAPVTPECGHTFCQGCLTGAPKNQDQNGSTPCPTCQ. A B box-type zinc finger spans residues 83 to 124; that stretch reads VPKGHCLEHLDPLSVYCEQDKELICGVCASLGKHKGHNIITA. Positions 135–232 form a coiled coil; it reads LPQQQVILQE…QMDGVLKDVE (98 aa). The B30.2/SPRY domain maps to 272–476; it reads DEFKFQVWRK…LKIFYPPAEQ (205 aa).

The protein belongs to the TRIM/RBCC family. In terms of assembly, homodimer. Homooligomer; disulfide-linked. Oligomerizes on the phospholipid membrane. Post-translationally, disulfide bond formation at Cys-244 occurs in case of membrane damage that cause the entry of the oxidized milieu of the extracellular space, resulting in homooligomerization.

It is found in the cell membrane. The protein resides in the sarcolemma. It localises to the cytoplasmic vesicle membrane. The enzyme catalyses S-ubiquitinyl-[E2 ubiquitin-conjugating enzyme]-L-cysteine + [acceptor protein]-L-lysine = [E2 ubiquitin-conjugating enzyme]-L-cysteine + N(6)-ubiquitinyl-[acceptor protein]-L-lysine.. It participates in protein modification; protein ubiquitination. Specifically binds phosphatidylserine. The binding to phospholipids enhances ubiquitination activity. Muscle-specific E3 ubiquitin-protein ligase that plays a central role in cell membrane repair by nucleating the assembly of the repair machinery at injury sites. Acts as a sensor of oxidation: upon membrane damage, entry of extracellular oxidative environment results in disulfide bond formation and homooligomerization at the injury site. This oligomerization acts as a nucleation site for recruitment of TRIM72-containing vesicles to the injury site, leading to membrane patch formation. Probably acts upstream of the Ca(2+)-dependent membrane resealing process. Required for transport of DYSF to sites of cell injury during repair patch formation. Regulates membrane budding and exocytosis. May be involved in the regulation of the mobility of KCNB1-containing endocytic vesicles. The polypeptide is Tripartite motif-containing protein 72 (trim72) (Xenopus tropicalis (Western clawed frog)).